Consider the following 533-residue polypeptide: CTP synthase (533 aa).

The segment at methionine 1–leucine 265 is amidoligase domain. Serine 13 provides a ligand contact to CTP. UTP is bound at residue serine 13. Glycine 14–isoleucine 19 contributes to the ATP binding site. Tyrosine 54 is a binding site for L-glutamine. Aspartate 71 contributes to the ATP binding site. 2 residues coordinate Mg(2+): aspartate 71 and glutamate 139. Residues aspartate 146–glutamate 148, lysine 186–glutamine 191, and lysine 222 each bind CTP. UTP contacts are provided by residues lysine 186–glutamine 191 and lysine 222. The 243-residue stretch at glutamate 290 to glycine 532 folds into the Glutamine amidotransferase type-1 domain. An L-glutamine-binding site is contributed by glycine 351. The active-site Nucleophile; for glutamine hydrolysis is the cysteine 378. Residues phenylalanine 379–glutamine 382, glutamate 402, and arginine 459 each bind L-glutamine. Residues histidine 505 and glutamate 507 contribute to the active site.

It belongs to the CTP synthase family. Homotetramer.

It catalyses the reaction UTP + L-glutamine + ATP + H2O = CTP + L-glutamate + ADP + phosphate + 2 H(+). It carries out the reaction L-glutamine + H2O = L-glutamate + NH4(+). The enzyme catalyses UTP + NH4(+) + ATP = CTP + ADP + phosphate + 2 H(+). The protein operates within pyrimidine metabolism; CTP biosynthesis via de novo pathway; CTP from UDP: step 2/2. Its activity is regulated as follows. Allosterically activated by GTP, when glutamine is the substrate; GTP has no effect on the reaction when ammonia is the substrate. The allosteric effector GTP functions by stabilizing the protein conformation that binds the tetrahedral intermediate(s) formed during glutamine hydrolysis. Inhibited by the product CTP, via allosteric rather than competitive inhibition. Its function is as follows. Catalyzes the ATP-dependent amination of UTP to CTP with either L-glutamine or ammonia as the source of nitrogen. Regulates intracellular CTP levels through interactions with the four ribonucleotide triphosphates. The sequence is that of CTP synthase from Thermococcus gammatolerans (strain DSM 15229 / JCM 11827 / EJ3).